A 268-amino-acid polypeptide reads, in one-letter code: Ribosomal RNA small subunit methyltransferase A (268 aa).

S-adenosyl-L-methionine contacts are provided by N23, L25, G50, E72, D94, and N116.

Belongs to the class I-like SAM-binding methyltransferase superfamily. rRNA adenine N(6)-methyltransferase family. RsmA subfamily.

The protein resides in the cytoplasm. It carries out the reaction adenosine(1518)/adenosine(1519) in 16S rRNA + 4 S-adenosyl-L-methionine = N(6)-dimethyladenosine(1518)/N(6)-dimethyladenosine(1519) in 16S rRNA + 4 S-adenosyl-L-homocysteine + 4 H(+). In terms of biological role, specifically dimethylates two adjacent adenosines (A1518 and A1519) in the loop of a conserved hairpin near the 3'-end of 16S rRNA in the 30S particle. May play a critical role in biogenesis of 30S subunits. This is Ribosomal RNA small subunit methyltransferase A from Mycoplasmoides gallisepticum (strain R(low / passage 15 / clone 2)) (Mycoplasma gallisepticum).